A 298-amino-acid polypeptide reads, in one-letter code: tRNA dimethylallyltransferase 2 (298 aa).

G10 to T17 contributes to the ATP binding site. T12–T17 is a substrate binding site. The segment at D35–Q38 is interaction with substrate tRNA.

This sequence belongs to the IPP transferase family. In terms of assembly, monomer. Mg(2+) serves as cofactor.

The enzyme catalyses adenosine(37) in tRNA + dimethylallyl diphosphate = N(6)-dimethylallyladenosine(37) in tRNA + diphosphate. Its function is as follows. Catalyzes the transfer of a dimethylallyl group onto the adenine at position 37 in tRNAs that read codons beginning with uridine, leading to the formation of N6-(dimethylallyl)adenosine (i(6)A). In Syntrophotalea carbinolica (strain DSM 2380 / NBRC 103641 / GraBd1) (Pelobacter carbinolicus), this protein is tRNA dimethylallyltransferase 2.